The sequence spans 370 residues: 3-isopropylmalate dehydrogenase 2 (370 aa).

77–90 (GPKWDAVPYEVRPE) serves as a coordination point for NAD(+). 4 residues coordinate substrate: Arg-97, Arg-107, Arg-135, and Asp-226. The Mg(2+) site is built by Asp-226, Asp-250, and Asp-254. Residue 290 to 302 (GSAPDIAGKGLAN) coordinates NAD(+).

This sequence belongs to the isocitrate and isopropylmalate dehydrogenases family. LeuB type 1 subfamily. In terms of assembly, homodimer. Requires Mg(2+) as cofactor. Mn(2+) serves as cofactor.

The protein localises to the cytoplasm. The catalysed reaction is (2R,3S)-3-isopropylmalate + NAD(+) = 4-methyl-2-oxopentanoate + CO2 + NADH. It functions in the pathway amino-acid biosynthesis; L-leucine biosynthesis; L-leucine from 3-methyl-2-oxobutanoate: step 3/4. Functionally, catalyzes the oxidation of 3-carboxy-2-hydroxy-4-methylpentanoate (3-isopropylmalate) to 3-carboxy-4-methyl-2-oxopentanoate. The product decarboxylates to 4-methyl-2 oxopentanoate. This chain is 3-isopropylmalate dehydrogenase 2, found in Bradyrhizobium diazoefficiens (strain JCM 10833 / BCRC 13528 / IAM 13628 / NBRC 14792 / USDA 110).